Consider the following 418-residue polypeptide: Serine hydroxymethyltransferase (418 aa).

(6S)-5,6,7,8-tetrahydrofolate is bound by residues leucine 121 and 125–127 (GHL). Lysine 230 carries the post-translational modification N6-(pyridoxal phosphate)lysine. (6S)-5,6,7,8-tetrahydrofolate contacts are provided by residues glutamate 246 and 355-357 (SPF).

It belongs to the SHMT family. As to quaternary structure, homodimer. Pyridoxal 5'-phosphate is required as a cofactor.

The protein resides in the cytoplasm. It carries out the reaction (6R)-5,10-methylene-5,6,7,8-tetrahydrofolate + glycine + H2O = (6S)-5,6,7,8-tetrahydrofolate + L-serine. Its pathway is one-carbon metabolism; tetrahydrofolate interconversion. It functions in the pathway amino-acid biosynthesis; glycine biosynthesis; glycine from L-serine: step 1/1. Functionally, catalyzes the reversible interconversion of serine and glycine with tetrahydrofolate (THF) serving as the one-carbon carrier. This reaction serves as the major source of one-carbon groups required for the biosynthesis of purines, thymidylate, methionine, and other important biomolecules. Also exhibits THF-independent aldolase activity toward beta-hydroxyamino acids, producing glycine and aldehydes, via a retro-aldol mechanism. This chain is Serine hydroxymethyltransferase, found in Streptococcus pneumoniae (strain Taiwan19F-14).